Reading from the N-terminus, the 156-residue chain is Small ribosomal subunit protein uS7 (156 aa).

This sequence belongs to the universal ribosomal protein uS7 family. Part of the 30S ribosomal subunit. Contacts proteins S9 and S11.

One of the primary rRNA binding proteins, it binds directly to 16S rRNA where it nucleates assembly of the head domain of the 30S subunit. Is located at the subunit interface close to the decoding center, probably blocks exit of the E-site tRNA. The polypeptide is Small ribosomal subunit protein uS7 (Exiguobacterium sibiricum (strain DSM 17290 / CCUG 55495 / CIP 109462 / JCM 13490 / 255-15)).